A 308-amino-acid polypeptide reads, in one-letter code: Ribosomal RNA large subunit methyltransferase F (308 aa).

This sequence belongs to the methyltransferase superfamily. METTL16/RlmF family.

The protein resides in the cytoplasm. The catalysed reaction is adenosine(1618) in 23S rRNA + S-adenosyl-L-methionine = N(6)-methyladenosine(1618) in 23S rRNA + S-adenosyl-L-homocysteine + H(+). Functionally, specifically methylates the adenine in position 1618 of 23S rRNA. The chain is Ribosomal RNA large subunit methyltransferase F from Escherichia coli O6:H1 (strain CFT073 / ATCC 700928 / UPEC).